The primary structure comprises 513 residues: Probable G-protein coupled receptor Mth-like 9 (513 aa).

A signal peptide spans 1-19 (MVSPLIILLIIWLSVGAKS). Residues 20-207 (VEIASINHPC…NCERFQTGYR (188 aa)) are Extracellular-facing. 4 cysteine pairs are disulfide-bonded: C29/C82, C84/C89, C93/C181, and C94/C107. An N-linked (GlcNAc...) asparagine glycan is attached at N36. N-linked (GlcNAc...) asparagine glycans are attached at residues N106, N125, and N165. The chain crosses the membrane as a helical span at residues 208-228 (VWIYAICSIIAIIINIFILSL). Over 229-242 (LGSVRDARKSHYGQ) the chain is Cytoplasmic. The helical transmembrane segment at 243 to 263 (LIIYYLLSMIVGYSLLVYLAL) threads the bilayer. Topologically, residues 264–276 (KNPMKLSHVACRN) are extracellular. Residues 277–297 (IGFLAYFCIMLSFVFLAICSL) form a helical membrane-spanning segment. Residues 298-314 (DFLLKFKQKAVRSSVRR) are Cytoplasmic-facing. Residues 315–335 (LSLALAVLAVIGLRFLVSLAQ) form a helical membrane-spanning segment. The Extracellular portion of the chain corresponds to 336-360 (DSKLPKHFKPGMGEDYCWFDVRTWG). The chain crosses the membrane as a helical span at residues 361-381 (ILIYYYGPIALLLIFSIVCCL). Residues 382-403 (KAYFSIYELPPDTQYILGTQLK) lie on the Cytoplasmic side of the membrane. Residues 404–424 (IVKTHFYAFSAYIVGVFAVWI) form a helical membrane-spanning segment. Residues 425–438 (REIVVYIMARVREH) are Extracellular-facing. The helical transmembrane segment at 439-459 (FFIIDFWSGICILGLAIAGFI) threads the bilayer. Over 460–513 (LLLGKNLHVKSWWAINVESSQTDLSIINARVYKFDEKGDLKSSDSPYKPTVTSL) the chain is Cytoplasmic.

The protein belongs to the G-protein coupled receptor 2 family. Mth subfamily.

Its subcellular location is the cell membrane. The protein is Probable G-protein coupled receptor Mth-like 9 (mthl9) of Drosophila melanogaster (Fruit fly).